We begin with the raw amino-acid sequence, 732 residues long: uncharacterized protein (732 aa).

This sequence belongs to the mimivirus L137 family.

This is an uncharacterized protein from Acanthamoeba polyphaga mimivirus (APMV).